The following is a 72-amino-acid chain: Translation initiation factor IF-1 (72 aa).

Residues 1–72 (MAKEDVIEVE…NRGRIIYRFK (72 aa)) form the S1-like domain.

The protein belongs to the IF-1 family. In terms of assembly, component of the 30S ribosomal translation pre-initiation complex which assembles on the 30S ribosome in the order IF-2 and IF-3, IF-1 and N-formylmethionyl-tRNA(fMet); mRNA recruitment can occur at any time during PIC assembly.

It localises to the cytoplasm. One of the essential components for the initiation of protein synthesis. Stabilizes the binding of IF-2 and IF-3 on the 30S subunit to which N-formylmethionyl-tRNA(fMet) subsequently binds. Helps modulate mRNA selection, yielding the 30S pre-initiation complex (PIC). Upon addition of the 50S ribosomal subunit IF-1, IF-2 and IF-3 are released leaving the mature 70S translation initiation complex. The sequence is that of Translation initiation factor IF-1 from Syntrophomonas wolfei subsp. wolfei (strain DSM 2245B / Goettingen).